The following is a 297-amino-acid chain: HTH-type transcriptional regulator ArgP (297 aa).

One can recognise an HTH lysR-type domain in the interval 4-60; it reads PDYRTLQALDAVIRERGFERAAQKLCITQSAVSQRIKQLENMFGQPLLVRTVPPRPT. A DNA-binding region (H-T-H motif) is located at residues 21–40; it reads FERAAQKLCITQSAVSQRIK.

Belongs to the LysR transcriptional regulatory family. As to quaternary structure, homodimer.

Controls the transcription of genes involved in arginine and lysine metabolism. The sequence is that of HTH-type transcriptional regulator ArgP from Citrobacter koseri (strain ATCC BAA-895 / CDC 4225-83 / SGSC4696).